The following is a 370-amino-acid chain: MKFARSGAAVSLLAAGTLVLTACGGGTNSSSSGAGGTSGSVHCGGKKELHSSGSTAQENAMEQFVYAYVRSCPGYTLDYNANGSGAGVTQFLNNETDFAGSDVPLNPSTGQPDRSAERCGSPAWDLPTVFGPIAITYNIKGVSTLNLDGPTTAKIFNGTITVWNDPQIQALNSGTDLPPTPISVIFRSDKSGTSDNFQKYLDGASNGAWGKGASETFNGGVGVGASGNNGTSALLQTTDGSITYNEWSFAVGKQLNMAQIITSAGPDPVAITTESVGKTIAGAKIMGQGNDLVLDTSSFYRPTQPGSYPIVLATYEIVCSKYPDATTGTAVRAFMQAAIGPGQEGLDQYGSIPLPKSFQAKLAAAVNAIS.

The signal sequence occupies residues 1 to 22 (MKFARSGAAVSLLAAGTLVLTA). Cysteine 23 carries the N-palmitoyl cysteine lipid modification. The S-diacylglycerol cysteine moiety is linked to residue cysteine 23. Phosphate-binding positions include 54–56 (STA), serine 84, aspartate 102, and 191–193 (SGT).

Belongs to the PstS family. In terms of assembly, the complex is composed of two ATP-binding proteins (PstB), two transmembrane proteins (PstC and PstA) and a solute-binding protein (PstS).

The protein localises to the cell membrane. Functionally, functions in inorganic phosphate uptake, although probably not the main uptake protein under phosphate starvation. Part of the ABC transporter complex PstSACB involved in phosphate import. This chain is Phosphate-binding protein PstS 2 (pstS2), found in Mycobacterium tuberculosis (strain ATCC 25618 / H37Rv).